The sequence spans 159 residues: S-ribosylhomocysteine lyase 1 (159 aa).

Fe cation-binding residues include histidine 54, histidine 58, and cysteine 124.

The protein belongs to the LuxS family. Homodimer. The cofactor is Fe cation.

The enzyme catalyses S-(5-deoxy-D-ribos-5-yl)-L-homocysteine = (S)-4,5-dihydroxypentane-2,3-dione + L-homocysteine. In terms of biological role, involved in the synthesis of autoinducer 2 (AI-2) which is secreted by bacteria and is used to communicate both the cell density and the metabolic potential of the environment. The regulation of gene expression in response to changes in cell density is called quorum sensing. Catalyzes the transformation of S-ribosylhomocysteine (RHC) to homocysteine (HC) and 4,5-dihydroxy-2,3-pentadione (DPD). This is S-ribosylhomocysteine lyase 1 from Lactobacillus delbrueckii subsp. bulgaricus (strain ATCC BAA-365 / Lb-18).